The following is a 100-amino-acid chain: NADH-quinone oxidoreductase subunit K (100 aa).

Transmembrane regions (helical) follow at residues 4–24 (LQHGLILAAILFVLGLTGLLI), 28–48 (LLFMLISLEVMINAAALAFVV), and 60–80 (VMYILAITLAAAEASIGLALL).

The protein belongs to the complex I subunit 4L family. In terms of assembly, NDH-1 is composed of 13 different subunits. Subunits NuoA, H, J, K, L, M, N constitute the membrane sector of the complex.

It is found in the cell inner membrane. The catalysed reaction is a quinone + NADH + 5 H(+)(in) = a quinol + NAD(+) + 4 H(+)(out). In terms of biological role, NDH-1 shuttles electrons from NADH, via FMN and iron-sulfur (Fe-S) centers, to quinones in the respiratory chain. The immediate electron acceptor for the enzyme in this species is believed to be ubiquinone. Couples the redox reaction to proton translocation (for every two electrons transferred, four hydrogen ions are translocated across the cytoplasmic membrane), and thus conserves the redox energy in a proton gradient. The chain is NADH-quinone oxidoreductase subunit K from Yersinia pseudotuberculosis serotype O:1b (strain IP 31758).